Reading from the N-terminus, the 123-residue chain is Putative membrane protein insertion efficiency factor (123 aa).

This sequence belongs to the UPF0161 family.

The protein resides in the cell inner membrane. Could be involved in insertion of integral membrane proteins into the membrane. In Beijerinckia indica subsp. indica (strain ATCC 9039 / DSM 1715 / NCIMB 8712), this protein is Putative membrane protein insertion efficiency factor.